Here is a 154-residue protein sequence, read N- to C-terminus: uncharacterized protein (154 aa).

The interval 91–154 is disordered; the sequence is PSEESWGCRQ…WGSPQPSRGA (64 aa). The span at 134-154 shows a compositional bias: polar residues; that stretch reads SRDTSPLGGQSWGSPQPSRGA.

This is an uncharacterized protein from Homo sapiens (Human).